A 345-amino-acid polypeptide reads, in one-letter code: Esterase (345 aa).

Residues 1–39 (MSSAMRKTTNSPVVRRLTAAAVALGSCLALAGPAGSAGA) form the signal peptide. 3 disulfides stabilise this stretch: Cys73–Cys103, Cys156–Cys180, and Cys236–Cys294.

It localises to the secreted. This chain is Esterase (estA), found in Streptomyces scabiei.